The chain runs to 267 residues: Cilia- and flagella-associated protein 300 (267 aa).

It belongs to the CFAP300 family.

It localises to the cytoplasm. The protein localises to the cytoskeleton. It is found in the cilium axoneme. In terms of biological role, cilium- and flagellum-specific protein that plays a role in axonemal structure organization and motility. May play a role in outer and inner dynein arm assembly. The sequence is that of Cilia- and flagella-associated protein 300 from Xenopus tropicalis (Western clawed frog).